An 89-amino-acid polypeptide reads, in one-letter code: Defensin-like protein 197 (89 aa).

The signal sequence occupies residues 1–26 (MKFVSVFLVLFIFFLVVLEAPEKIEA). Cystine bridges form between Cys33-Cys86, Cys46-Cys70, Cys55-Cys81, and Cys59-Cys83.

Belongs to the DEFL family. Protease inhibitor I18 (RTI/MTI-2) subfamily.

The protein resides in the secreted. This chain is Defensin-like protein 197 (ATTI6), found in Arabidopsis thaliana (Mouse-ear cress).